Reading from the N-terminus, the 249-residue chain is Nicotinamide/nicotinic acid mononucleotide adenylyltransferase (249 aa).

Residues S34 and F35 each coordinate NAD(+). ATP is bound by residues H42 and K75. NAD(+) is bound by residues T112, G141, D143, W154, R173, and N204. 209-210 (SR) is a binding site for ATP.

This sequence belongs to the eukaryotic NMN adenylyltransferase family. A divalent metal cation serves as cofactor.

The catalysed reaction is beta-nicotinamide D-ribonucleotide + ATP + H(+) = diphosphate + NAD(+). The enzyme catalyses nicotinate beta-D-ribonucleotide + ATP + H(+) = deamido-NAD(+) + diphosphate. The protein operates within cofactor biosynthesis; NAD(+) biosynthesis; deamido-NAD(+) from nicotinate D-ribonucleotide: step 1/1. It participates in cofactor biosynthesis; NAD(+) biosynthesis; NAD(+) from nicotinamide D-ribonucleotide: step 1/1. Its function is as follows. Catalyzes the formation of NAD(+) from nicotinamide mononucleotide (NMN) and ATP. Can also use the deamidated form; nicotinic acid mononucleotide (NaMN) as substrate. This is Nicotinamide/nicotinic acid mononucleotide adenylyltransferase from Oryza sativa subsp. japonica (Rice).